The chain runs to 252 residues: 5-oxoprolinase subunit A (252 aa).

Belongs to the LamB/PxpA family. In terms of assembly, forms a complex composed of PxpA, PxpB and PxpC.

It catalyses the reaction 5-oxo-L-proline + ATP + 2 H2O = L-glutamate + ADP + phosphate + H(+). Catalyzes the cleavage of 5-oxoproline to form L-glutamate coupled to the hydrolysis of ATP to ADP and inorganic phosphate. In Mycolicibacterium paratuberculosis (strain ATCC BAA-968 / K-10) (Mycobacterium paratuberculosis), this protein is 5-oxoprolinase subunit A.